The chain runs to 822 residues: Dimethyl sulfoxide/trimethylamine N-oxide reductase (822 aa).

A signal peptide (tat-type signal) is located at residues 1 to 42 (MTKLSGQELHAELSRRAFLSYTAAVGALGLCGTSLLAQGARA). Residues tryptophan 158, 158–160 (WKS), serine 189, 232–233 (KT), 262–263 (IN), 283–285 (QTD), 364–365 (WS), arginine 368, asparagine 476, histidine 480, 500–501 (QD), arginine 523, aspartate 553, 683–686 (ASHP), arginine 689, 691–693 (HSQ), asparagine 779, and 796–797 (GQ) each bind Mo-bis(molybdopterin guanine dinucleotide).

Belongs to the prokaryotic molybdopterin-containing oxidoreductase family. In terms of assembly, homodimer. Mo-bis(molybdopterin guanine dinucleotide) is required as a cofactor. Post-translationally, predicted to be exported by the Tat system. The position of the signal peptide cleavage has been experimentally proven.

The protein localises to the periplasm. It carries out the reaction dimethyl sulfide + a menaquinone + H2O = dimethyl sulfoxide + a menaquinol. It catalyses the reaction trimethylamine + 2 Fe(III)-[cytochrome c] + H2O = trimethylamine N-oxide + 2 Fe(II)-[cytochrome c] + 3 H(+). Its function is as follows. Catalyzes the reduction of dimethyl sulfoxide (DMSO) and trimethylamine N-oxide (TMAO) to dimethyl sulfide (DMS) and trimethylamine, respectively. The terminal DMSO reductase can also use various sulfoxides and N-oxide compounds as terminal electron acceptor in addition to DMSO and TMAO. The protein is Dimethyl sulfoxide/trimethylamine N-oxide reductase (dmsA) of Cereibacter sphaeroides (Rhodobacter sphaeroides).